A 613-amino-acid chain; its full sequence is Acetylcholinesterase (613 aa).

A signal peptide spans 1 to 30; the sequence is MRPPWCPLHTPSLTPPLLLLLFLIGGGAEA. A glycan (N-linked (GlcNAc...) asparagine) is linked at Asn-91. Cys-99 and Cys-126 are disulfide-bonded. Ser-233 acts as the Acyl-ester intermediate in catalysis. A disulfide bridge links Cys-287 with Cys-302. Asn-295 carries an N-linked (GlcNAc...) asparagine glycan. Glu-364 serves as the catalytic Charge relay system. The N-linked (GlcNAc...) asparagine glycan is linked to Asn-380. Cysteines 439 and 559 form a disulfide. His-477 serves as the catalytic Charge relay system. The N-linked (GlcNAc...) asparagine glycan is linked to Asn-494.

This sequence belongs to the type-B carboxylesterase/lipase family. As to quaternary structure, interacts with PRIMA1. The interaction with PRIMA1 is required to anchor it to the basal lamina of cells and organize into tetramers. Isoform H generates GPI-anchored dimers; disulfide linked. Isoform T generates multiple structures, ranging from monomers and dimers to collagen-tailed and hydrophobic-tailed forms, in which catalytic tetramers are associated with anchoring proteins that attach them to the basal lamina or to cell membranes. In the collagen-tailed forms, isoform T subunits are associated with a specific collagen, COLQ, which triggers the formation of isoform T tetramers, from monomers and dimers.

The protein localises to the synapse. Its subcellular location is the secreted. It is found in the cell membrane. It catalyses the reaction acetylcholine + H2O = choline + acetate + H(+). Its function is as follows. Terminates signal transduction at the neuromuscular junction by rapid hydrolysis of the acetylcholine released into the synaptic cleft. The polypeptide is Acetylcholinesterase (ACHE) (Bos taurus (Bovine)).